Reading from the N-terminus, the 120-residue chain is Large ribosomal subunit protein bL19 (120 aa).

This sequence belongs to the bacterial ribosomal protein bL19 family.

Its function is as follows. This protein is located at the 30S-50S ribosomal subunit interface and may play a role in the structure and function of the aminoacyl-tRNA binding site. In Picosynechococcus sp. (strain ATCC 27264 / PCC 7002 / PR-6) (Agmenellum quadruplicatum), this protein is Large ribosomal subunit protein bL19.